A 676-amino-acid polypeptide reads, in one-letter code: Hypermethylated in cancer 1 protein (676 aa).

The segment at 1-27 (APGARPAASRERGHKSREERCGERGAA) is disordered. Residues 8–23 (ASRERGHKSREERCGE) are compositionally biased toward basic and acidic residues. A BTB domain is found at 63-126 (CDVIIVVQNA…IYTGRLGECE (64 aa)). Residues 241-245 (GLDLS) are binding to CtBP. 2 disordered regions span residues 264–326 (PAEP…LPRG) and 342–405 (GPYL…DRYC). Basic and acidic residues-rich tracts occupy residues 266–278 (EPREPSLPPRHDS) and 351–361 (EKELEREEKAE). Residues 384–398 (STSEETGSSEGPSPG) are compositionally biased toward low complexity. C2H2-type zinc fingers lie at residues 420-447 (YVCIPCGKGFPSSEQLNAHVEAHNEEEL), 474-501 (YRCSSCDKSYKDPATLRQHEKTHWLTRP), 502-529 (YPCTICGKKFTQRGTMTRHMRSHLGLKP), 530-557 (FACDACGMRFTRQYRLTEHMRIHSGEKP), and 558-585 (YECQVCGGKFAQQRNLISHMKMHAAGPD).

The protein belongs to the krueppel C2H2-type zinc-finger protein family. Hic subfamily. Interacts with CtBP. In terms of tissue distribution, isoform 1 is highly expressed in kidney and lung. Expression of isoform 2 is higher in the lens, retina and stomach, and extremely low in heart, muscle, kidney and lung. Isoform 3 is weakly expressed in heart, kidney and lens.

It is found in the nucleus. Binds specifically to the gamma F-1-binding motif of the gamma F-crystallin promoter. May have a regulatory role in sclerotome specification and/or differentiation. Isoform 2 functions as a transcriptional repressor in lens cells. In Gallus gallus (Chicken), this protein is Hypermethylated in cancer 1 protein (HIC1).